Reading from the N-terminus, the 215-residue chain is MASGDTKTSVKHAHLCAERLSVREEEGDAEDYCTPGAFELERLFWKGSPQYTHVNEVWPRLHIGDEATALDRYGLQKAGFTHVLNAAHGRWNVDTGPDYYRDMAIEYHGVEADDVPTFDLSIFFYSAAAFIDSALRDDHSKILVHCAMGRSRSATLVLAYLMIHKNMTLVDAIQQVAKNRCVLPNRGFLKQLRELDKQLVKQRRQAGPGDSDLGL.

The region spanning 53–201 (HVNEVWPRLH…LRELDKQLVK (149 aa)) is the Tyrosine-protein phosphatase domain. 145–152 (HCAMGRSR) lines the substrate pocket. Residue Cys146 is the Phosphocysteine intermediate of the active site.

This sequence belongs to the protein-tyrosine phosphatase family. Non-receptor class dual specificity subfamily. In terms of assembly, homodimer. Interacts with PRKAA2. Skeletal muscle, liver and adipose tissue.

It localises to the cytoplasm. The protein resides in the nucleus. It catalyses the reaction O-phospho-L-tyrosyl-[protein] + H2O = L-tyrosyl-[protein] + phosphate. It carries out the reaction O-phospho-L-seryl-[protein] + H2O = L-seryl-[protein] + phosphate. The catalysed reaction is O-phospho-L-threonyl-[protein] + H2O = L-threonyl-[protein] + phosphate. Its function is as follows. Dual specificity phosphatase able to dephosphorylate phosphotyrosine, phosphoserine and phosphothreonine residues within the same substrate, with a preference for phosphotyrosine as a substrate. Involved in the modulation of intracellular signaling cascades. In skeletal muscle regulates systemic glucose homeostasis by activating, AMPK, an energy sensor protein kinase. Affects MAP kinase signaling though modulation of the MAPK1/2 cascade in skeletal muscle promoting muscle cell differentiation, development and atrophy. The sequence is that of Dual specificity phosphatase 29 from Mus musculus (Mouse).